A 110-amino-acid chain; its full sequence is Hydrogenase maturation factor HypA (110 aa).

His2 contacts Ni(2+). Zn(2+) contacts are provided by Cys70, Cys73, Cys86, and Cys89.

Belongs to the HypA/HybF family.

Functionally, involved in the maturation of [NiFe] hydrogenases. Required for nickel insertion into the metal center of the hydrogenase. The protein is Hydrogenase maturation factor HypA of Geobacter sulfurreducens (strain ATCC 51573 / DSM 12127 / PCA).